The primary structure comprises 123 residues: MSGKVEIMNMDMKVGKTLKIKGKXDDDADGFXINLGQGTDKLALHFXPRFGESTIVCNXRDGNXWGKEQRDSHMXFXPGSEVKLIVTFEEDGFKVKLPDGHQLTFPNRLGYSHLRYLSVQGGF.

Residues 4–123 (KVEIMNMDMK…LRYLSVQGGF (120 aa)) form the Galectin domain. 65 to 71 (WGKEQRD) contributes to the a beta-D-galactoside binding site.

Homodimer.

Functionally, this protein binds beta-galactoside. Its physiological function is not yet known. The chain is Galectin-2 (LGALS2) from Sus scrofa (Pig).